We begin with the raw amino-acid sequence, 161 residues long: MSQLTHINAAGEAHMVDVSAKAETVREARAEAFVTMHSETLAMIIDGKHHKGDVFATARIAGIQAAKRTWELIPLCHPLLLSKVEVQLQAESEHNRVRIESLCRLTGKTGVEMEALTAASVAALTIYDMCKAVQKDMVIGPVRLLAKSGGNSGDFKVDTHD.

Residues 75–77 and 113–114 each bind substrate; these read LCH and ME. D128 is an active-site residue.

This sequence belongs to the MoaC family. In terms of assembly, homohexamer; trimer of dimers.

It catalyses the reaction (8S)-3',8-cyclo-7,8-dihydroguanosine 5'-triphosphate = cyclic pyranopterin phosphate + diphosphate. Its pathway is cofactor biosynthesis; molybdopterin biosynthesis. Functionally, catalyzes the conversion of (8S)-3',8-cyclo-7,8-dihydroguanosine 5'-triphosphate to cyclic pyranopterin monophosphate (cPMP). In Salmonella arizonae (strain ATCC BAA-731 / CDC346-86 / RSK2980), this protein is Cyclic pyranopterin monophosphate synthase.